The primary structure comprises 126 residues: Fatty acid-binding protein, liver (126 aa).

An N-acetylalanine modification is found at Ala-2. Positions 77, 99, and 101 each coordinate cholate.

Belongs to the calycin superfamily. Fatty-acid binding protein (FABP) family.

It localises to the cytoplasm. In terms of biological role, binds free fatty acids and their coenzyme A derivatives, bilirubin, and some other small molecules in the cytoplasm. May be involved in intracellular lipid transport. The sequence is that of Fatty acid-binding protein, liver (fabp1) from Aquarana catesbeiana (American bullfrog).